A 944-amino-acid polypeptide reads, in one-letter code: Protein translocase subunit SecA (944 aa).

Residues Q90, 108–112, and D509 contribute to the ATP site; that span reads GEGKT. The disordered stretch occupies residues 533–565; it reads VKPEEGHKPPVSPQRKTKSAGFKEEKNKNLSIS.

Belongs to the SecA family. As to quaternary structure, monomer and homodimer. Part of the essential Sec protein translocation apparatus which comprises SecA, SecYEG and auxiliary proteins SecDF. Other proteins may also be involved.

The protein localises to the cell inner membrane. Its subcellular location is the cellular thylakoid membrane. It localises to the cytoplasm. It carries out the reaction ATP + H2O + cellular proteinSide 1 = ADP + phosphate + cellular proteinSide 2.. Its function is as follows. Part of the Sec protein translocase complex. Interacts with the SecYEG preprotein conducting channel. Has a central role in coupling the hydrolysis of ATP to the transfer of proteins into and across the cell membrane, serving as an ATP-driven molecular motor driving the stepwise translocation of polypeptide chains across the membrane. In terms of biological role, probably participates in protein translocation into and across both the cytoplasmic and thylakoid membranes in cyanobacterial cells. This Prochlorococcus marinus (strain NATL1A) protein is Protein translocase subunit SecA.